The sequence spans 426 residues: Gamma-glutamyl phosphate reductase (426 aa).

It belongs to the gamma-glutamyl phosphate reductase family.

It is found in the cytoplasm. It catalyses the reaction L-glutamate 5-semialdehyde + phosphate + NADP(+) = L-glutamyl 5-phosphate + NADPH + H(+). It functions in the pathway amino-acid biosynthesis; L-proline biosynthesis; L-glutamate 5-semialdehyde from L-glutamate: step 2/2. Its function is as follows. Catalyzes the NADPH-dependent reduction of L-glutamate 5-phosphate into L-glutamate 5-semialdehyde and phosphate. The product spontaneously undergoes cyclization to form 1-pyrroline-5-carboxylate. In Cupriavidus pinatubonensis (strain JMP 134 / LMG 1197) (Cupriavidus necator (strain JMP 134)), this protein is Gamma-glutamyl phosphate reductase.